The chain runs to 73 residues: UPF0346 protein lp_1865 (73 aa).

This sequence belongs to the UPF0346 family.

In Lactiplantibacillus plantarum (strain ATCC BAA-793 / NCIMB 8826 / WCFS1) (Lactobacillus plantarum), this protein is UPF0346 protein lp_1865.